A 333-amino-acid chain; its full sequence is Protein APEM9 (333 aa).

The Cytoplasmic portion of the chain corresponds to 1-90; sequence MEATDIWGEI…ELRDVFGEVA (90 aa). Residues 91–102 form a helical membrane-spanning segment; the sequence is AIPVQVLLTGVC. The Peroxisomal segment spans residues 103-268; the sequence is LQISNGSYLG…KVGNTQFSMS (166 aa). The helical transmembrane segment at 269-285 threads the bilayer; sequence RGKVAVSLVGLIICYAL. Topologically, residues 286–333 are cytoplasmic; it reads KRKRAALIRIIRRQMESTRKAIVDFWKLAFSYQVNPLAAIQSIPSTTT.

Interacts with PEX6 and PEX19-1, but not with PEX1. Interacts (via N-terminus) with PEX13, and (via N-terminus and C-terminus) with PEX16. In terms of tissue distribution, expressed in roots, leaves, stems, flowers, buds and fruits.

It is found in the peroxisome membrane. In terms of biological role, involved in peroxisome biogenesis and matrix protein import. Required for pollen maturation and in vivo germination via its role in peroxisomal function, which partially involves jasmonic acid biosynthesis. Transported to peroxisomes via the interaction with PEX19-1. Required for peroxisomal protein import by acting as an anchoring protein for the AAA ATPase complex, which consists of PEX1 and PEX6. The sequence is that of Protein APEM9 from Arabidopsis thaliana (Mouse-ear cress).